We begin with the raw amino-acid sequence, 511 residues long: Fusicocca-1,10(14)-diene-8beta,16-diol C-9 hydroxylase (511 aa).

The helical transmembrane segment at 7 to 29 (TVAALAAVFVAGTLLSRLASWIR) threads the bilayer. Residues N64, N163, and N343 are each glycosylated (N-linked (GlcNAc...) asparagine). Residue C450 coordinates heme.

The protein belongs to the cytochrome P450 family. Heme serves as cofactor.

Its subcellular location is the membrane. Its pathway is mycotoxin biosynthesis. Its function is as follows. Cytochrome P450 monooxygenase; part of the 2 gene clusters that mediate the biosynthesis of fusicoccins, diterpene glucosides that display phytohormone-like activity and function as potent activators of plasma membrane H(+)-ATPases in plants by modifying 14-3-3 proteins and cause the plant disease constriction canker. The first step in the pathway is performed by the fusicoccadiene synthase PaFS that possesses both prenyl transferase and terpene cyclase activity, converting isopentenyl diphosphate and dimethylallyl diphosphate into geranylgeranyl diphosphate (GGDP) and successively converting GGDP into fusicocca-2,10(14)-diene, a precursor for fusicoccin H. The second step is the oxidation at the C-8 position by the cytochrome P450 monooxygenase PaP450-2 to yield fusicocca-2,10(14)-diene-8-beta-ol. The cytochrome P450 monooxygenase PaP450-1 then catalyzes the hydroxylation at the C-16 position to produce fusicocca-2,10(14)-diene-8-beta,16-diol. The dioxygenase fc-dox then catalyzes the 16-oxydation of fusicocca-2,10(14)-diene-8-beta,16-diol to yield an aldehyde (8-beta-hydroxyfusicocca-1,10(14)-dien-16-al). The short-chain dehydrogenase/reductase fc-sdr catalyzes the reduction of the aldehyde to yield fusicocca-1,10(14)-diene-8-beta,16-diol. The next step is the hydroxylation at C-9 performed by the cytochrome P450 monooxygenase PaP450-3 that leads to fusicoccin H aglycon which is glycosylated to fusicoccin H by the O-glycosyltransferase PaGT. Hydroxylation at C-12 by the cytochrome P450 monooxygenase PaP450-4 leads then to the production of fusicoccin Q and is followed by methylation by the O-methyltransferase PaMT to yield fusicoccin P. Fusicoccin P is further converted to fusicoccin J via prenylation by the O-glucose prenyltransferase PaPT. Cytochrome P450 monooxygenase PaP450-5 then performs hydroxylation at C-19 to yield dideacetyl-fusicoccin A which is acetylated to 3'-O-deacetyl-fusicoccin A by the O-acetyltransferase PaAT-2. Finally, a another acetylation by the O-acetyltransferase PaAT-1 yields fusicoccin A. In Phomopsis amygdali (Fusicoccum amygdali), this protein is Fusicocca-1,10(14)-diene-8beta,16-diol C-9 hydroxylase.